The sequence spans 857 residues: MMAAAGNASKPSLNNFYAEGLGHLREGLFSCFRPVLGYFGGKPTQEIEKTEDEGWEIPFDAISNLEWLGSGSQGAVFHGQYENRTVAVKKVNQLKETEIKHLRHLRHKNIIEFLGVCSKSPCYCIVMEYCPKGQLCTVLRQKNLITRQMFSDWVKEIADGMHYLHQNKVIHRDLKSPNILISAEDSIKICDFGTSHLQKKNDSTMMSFCGTVSWMAPEMIKKEPCNEKVDVYSFGVVLWEMLTRETPYANIAQMAIIFGVGTNILNLPMPEEAPRGLVLLIKQCLSQKGRNRPSFSHIRQHWEIFKPELFEMTEDEWQVAWDSYREFAKAIQYPSTVTKDHGGPKSAFAMEEEMQRKRHEQLNHIKDIRHMYEAKLKRTNKMYDKLQGCFTELKLKEHELAEWERNLAEREQMHVYNSPRSMSAAPRFQLRGNCYPNEAYEEMSSDEDGQCPPCRGSPYRNSNMSTSSGAQSSPFSRQSSCRSSAGQQTRRSEGANAQKISRNDLLRHSSSYWETIGNRGSPARGSGFSQDSGVWSAGVSSMAINGGVQGGVPVTYAQTIYRNGEGRWSDGRIASRRRVSSSANKNLPPVFFTRDSPSRVPHGVVNHSAPRSSSKLNRSSYPSRNAPHQLEDGCCCNHGRVPRAKSVAVSMATRGRSPTPYDNDASDAAENPDIHYELQIPETTSYDEALKSIGETDDVEMDAANGVNPIYSSPITTYNNPCHVNYENVTEENANDIDLTSSMDSRRSRADDADVESSEDEGNGNNILNTSMESEELRYRIDTSQSTMMSSLERSLEIGATRSDGLSDNERRVQAVKHSIKTHRRTSSNPQAIIHQRIEEYSSSATEDSDDAGAVRI.

The region spanning 62 to 304 (ISNLEWLGSG…FSHIRQHWEI (243 aa)) is the Protein kinase domain. ATP contacts are provided by residues 68–76 (LGSGSQGAV) and Lys89. Catalysis depends on Asp173, which acts as the Proton acceptor. Disordered stretches follow at residues 441–503 (EEMS…ISRN), 572–625 (RIAS…PSRN), 733–775 (NAND…MESE), and 818–857 (HSIK…AVRI). The span at 467–488 (SSGAQSSPFSRQSSCRSSAGQQ) shows a compositional bias: low complexity. The segment covering 609-623 (APRSSSKLNRSSYPS) has biased composition (polar residues). Residues 753 to 762 (ADVESSEDEG) are compositionally biased toward acidic residues. Over residues 763 to 772 (NGNNILNTSM) the composition is skewed to polar residues.

Belongs to the protein kinase superfamily. STE Ser/Thr protein kinase family. MAP kinase kinase kinase subfamily. Mg(2+) is required as a cofactor. Post-translationally, ubiquitinated by rpm-1. Negatively regulated by ubiquitination by fsn-1 bound rpm-1, followed by degradation.

The protein localises to the synapse. It carries out the reaction L-seryl-[protein] + ATP = O-phospho-L-seryl-[protein] + ADP + H(+). It catalyses the reaction L-threonyl-[protein] + ATP = O-phospho-L-threonyl-[protein] + ADP + H(+). Component of a MAP kinase pathway that functions presynaptically to regulate synaptic architecture and presynaptic differentiation. Phosphorylates and activates mkk-4. The chain is Mitogen-activated protein kinase kinase kinase dlk-1 from Caenorhabditis briggsae.